We begin with the raw amino-acid sequence, 325 residues long: Serine/threonine-protein phosphatase 2A activator 1 (325 aa).

The protein belongs to the PTPA-type PPIase family.

The protein resides in the cytoplasm. The protein localises to the nucleus. It carries out the reaction [protein]-peptidylproline (omega=180) = [protein]-peptidylproline (omega=0). In terms of biological role, PPIases accelerate the folding of proteins. It catalyzes the cis-trans isomerization of proline imidic peptide bonds in oligopeptides. Acts as a regulatory subunit for PP2A-like phosphatases modulating their activity or substrate specificity, probably by inducing a conformational change in the catalytic subunit, a direct target of the PPIase. Can reactivate inactive phosphatase PP2A-phosphatase methylesterase complexes (PP2Ai) in presence of ATP and Mg(2+) by dissociating the inactive form from the complex. The polypeptide is Serine/threonine-protein phosphatase 2A activator 1 (rrd1) (Schizosaccharomyces pombe (strain 972 / ATCC 24843) (Fission yeast)).